We begin with the raw amino-acid sequence, 64 residues long: Large ribosomal subunit protein bL35 (64 aa).

The interval 20 to 42 (GRVKREKMYGSHNLEKKNRKRTR) is disordered. Basic and acidic residues predominate over residues 25-35 (EKMYGSHNLEK).

Belongs to the bacterial ribosomal protein bL35 family.

In Chlorobium phaeobacteroides (strain BS1), this protein is Large ribosomal subunit protein bL35.